The chain runs to 198 residues: Protein GrpE (198 aa).

The interval 1–56 is disordered; sequence MVEKKKSQAEKNNQSATEEEIEKAVKGSKRDSNAADEKNSASAAASSSAVSDAEPA. Basic and acidic residues predominate over residues 22-39; sequence EKAVKGSKRDSNAADEKN. The span at 40–56 shows a compositional bias: low complexity; sequence SASAAASSSAVSDAEPA.

It belongs to the GrpE family. As to quaternary structure, homodimer.

The protein resides in the cytoplasm. In terms of biological role, participates actively in the response to hyperosmotic and heat shock by preventing the aggregation of stress-denatured proteins, in association with DnaK and GrpE. It is the nucleotide exchange factor for DnaK and may function as a thermosensor. Unfolded proteins bind initially to DnaJ; upon interaction with the DnaJ-bound protein, DnaK hydrolyzes its bound ATP, resulting in the formation of a stable complex. GrpE releases ADP from DnaK; ATP binding to DnaK triggers the release of the substrate protein, thus completing the reaction cycle. Several rounds of ATP-dependent interactions between DnaJ, DnaK and GrpE are required for fully efficient folding. This Oenococcus oeni (strain ATCC BAA-331 / PSU-1) protein is Protein GrpE.